The sequence spans 817 residues: Leucine--tRNA ligase (817 aa).

A 'HIGH' region motif is present at residues 42–52 (PYPSGRLHMGH). The 'KMSKS' region motif lies at 576–580 (KMSKS). Lysine 579 contributes to the ATP binding site.

The protein belongs to the class-I aminoacyl-tRNA synthetase family.

The protein resides in the cytoplasm. The catalysed reaction is tRNA(Leu) + L-leucine + ATP = L-leucyl-tRNA(Leu) + AMP + diphosphate. The polypeptide is Leucine--tRNA ligase (Halorhodospira halophila (strain DSM 244 / SL1) (Ectothiorhodospira halophila (strain DSM 244 / SL1))).